Here is a 763-residue protein sequence, read N- to C-terminus: MAP7 domain-containing protein 2 (763 aa).

The span at 1-11 (MERSGGNGAGA) shows a compositional bias: gly residues. Disordered stretches follow at residues 1–72 (MERS…REKC), 102–127 (LEEQ…LREE), and 140–531 (ERTQ…KAMI). Positions 12–31 (RAGAPSEGAAKGSSLLSAKS) are enriched in low complexity. Residues 53-72 (LKSDERQRLAKERREEREKC) show a composition bias toward basic and acidic residues. Polar residues-rich tracts occupy residues 184–212 (PSDT…NLPK) and 241–251 (LKSSYKSSPTR). Positions 312–321 (KRSSSPVKSK) are enriched in low complexity. 3 stretches are compositionally biased toward basic and acidic residues: residues 354–372 (ETLK…KEGA), 381–420 (PREE…EHSA), and 437–531 (LAEK…KAMI). The stretch at 434–575 (AKILAEKRRQ…QERLERKKRI (142 aa)) forms a coiled coil.

Belongs to the MAP7 family. Interacts (via N-terminus) with microtubules; facilitates microtubule stabilization. Interacts with kinesin-1 family members, KIF5A, KIF5B and KIF5C. Detected only in the brain and testis (at the protein level).

The protein localises to the cytoplasm. It localises to the cytoskeleton. The protein resides in the microtubule organizing center. Its subcellular location is the centrosome. It is found in the cell projection. The protein localises to the axon. Microtubule-stabilizing protein involved in the control of cell motility and neurite outgrowth. Acts as a critical cofactor for kinesin transport; in the proximal axon regulates kinesin-1 family members, KIF5A, KIF5B and KIF5C recruitment to microtubules and contributes to kinesin-1-mediated transport in the axons. This Rattus norvegicus (Rat) protein is MAP7 domain-containing protein 2 (Map7d2).